The chain runs to 217 residues: Probable glutathione S-transferase (217 aa).

In terms of domain architecture, GST N-terminal spans 2-81 (AEVKLLGLRY…YIDEAFEGPS (80 aa)). Glutathione contacts are provided by residues Ser-12, Lys-39, Ile-53, and 65–66 (ES). The GST C-terminal domain maps to 86-210 (DPYDRALARF…ELLIRYRAYI (125 aa)).

The protein belongs to the GST superfamily. HSP26 family.

The catalysed reaction is RX + glutathione = an S-substituted glutathione + a halide anion + H(+). This is Probable glutathione S-transferase (PRP1) from Solanum tuberosum (Potato).